A 279-amino-acid chain; its full sequence is Thymidylate synthase (279 aa).

Position 133–134 (133–134 (RR)) interacts with dUMP. Cys154 serves as the catalytic Nucleophile. DUMP-binding positions include 178-181 (RSND), Asn189, and 219-221 (HIY). Asp181 is a (6R)-5,10-methylene-5,6,7,8-tetrahydrofolate binding site. Position 278 (Ala278) interacts with (6R)-5,10-methylene-5,6,7,8-tetrahydrofolate.

This sequence belongs to the thymidylate synthase family. Bacterial-type ThyA subfamily. As to quaternary structure, homodimer.

The protein resides in the cytoplasm. It carries out the reaction dUMP + (6R)-5,10-methylene-5,6,7,8-tetrahydrofolate = 7,8-dihydrofolate + dTMP. It functions in the pathway pyrimidine metabolism; dTTP biosynthesis. In terms of biological role, catalyzes the reductive methylation of 2'-deoxyuridine-5'-monophosphate (dUMP) to 2'-deoxythymidine-5'-monophosphate (dTMP) while utilizing 5,10-methylenetetrahydrofolate (mTHF) as the methyl donor and reductant in the reaction, yielding dihydrofolate (DHF) as a by-product. This enzymatic reaction provides an intracellular de novo source of dTMP, an essential precursor for DNA biosynthesis. The chain is Thymidylate synthase from Streptococcus pyogenes serotype M3 (strain SSI-1).